A 278-amino-acid chain; its full sequence is MKFGVVARRDKLEALKLAYRVYDFLKVSGFDVVVDEDTYRYLGEFSEDDVLPLEEFDVDIIVVIGGDGTILRVEHKTKKEIPILGINMGTLGFLTEVEPHETFFALSRVIEGDYHIDERIKLRTFLDGENRVPDALNEVAVLTGIPGKIIHLKYYIDGGLADEVRADGLIISTPTGSTGYAMSAGGPFVDPRLDVVVIAPLAPIALSSRPMVVPSSSRIDVRNVAMTREVILSVDGQFYTYLSPETEITIVRSPRKTKFVRFNREIYPKYTMKIKSRF.

Asp67 serves as the catalytic Proton acceptor. Residues 67 to 68, Arg72, 137 to 138, Lys148, Arg165, Asp167, 178 to 183, Ala202, and Gln237 each bind NAD(+); these read DG, NE, and TGYAMS.

Belongs to the NAD kinase family. The cofactor is a divalent metal cation.

The protein resides in the cytoplasm. It carries out the reaction NAD(+) + ATP = ADP + NADP(+) + H(+). Its function is as follows. Involved in the regulation of the intracellular balance of NAD and NADP, and is a key enzyme in the biosynthesis of NADP. Catalyzes specifically the phosphorylation on 2'-hydroxyl of the adenosine moiety of NAD to yield NADP. This Thermococcus kodakarensis (strain ATCC BAA-918 / JCM 12380 / KOD1) (Pyrococcus kodakaraensis (strain KOD1)) protein is NAD kinase.